The sequence spans 311 residues: MADTTTLLHTTVLLDEAVDALLGGAGPAPAGVWIDATFGRGGHSRRILERLGPDGRLVAFDKDPEAIHEAARITDARFSIRHEGFRHLADLPERSAAGILMDLGVSSPQIDSPERGFSFRFDGPLDMRMDTTRGESVADWLATADVGQIAEVIREYGEERFAGPIAKAIAARRAERGPLRTTSELAQLVAGAVKTREAGQNPATRTFQALRIFINAELEELQAALEASLRVLAPGGRLAVISFHSLEDRIVKQFIAQHSREVYDRRAPFAAPQPMRLKALDRIKPGACEVDANPRARSAVMRVAERTEVPA.

S-adenosyl-L-methionine is bound by residues 41-43 (GGH), Asp61, Phe85, Asp102, and Gln109.

The protein belongs to the methyltransferase superfamily. RsmH family.

The protein localises to the cytoplasm. The catalysed reaction is cytidine(1402) in 16S rRNA + S-adenosyl-L-methionine = N(4)-methylcytidine(1402) in 16S rRNA + S-adenosyl-L-homocysteine + H(+). Functionally, specifically methylates the N4 position of cytidine in position 1402 (C1402) of 16S rRNA. The chain is Ribosomal RNA small subunit methyltransferase H from Paracidovorax citrulli (strain AAC00-1) (Acidovorax citrulli).